Consider the following 385-residue polypeptide: Probable dual-specificity RNA methyltransferase RlmN (385 aa).

The disordered stretch occupies residues 1 to 35; that stretch reads MNVKEPAEEAAIQLRTERQRIEPEGEEQSEQPTDL. The Proton acceptor role is filled by E121. Positions 132–367 constitute a Radical SAM core domain; it reads TRDRVTVCLS…AVIREERGQD (236 aa). C139 and C372 are joined by a disulfide. [4Fe-4S] cluster-binding residues include C146, C150, and C153. S-adenosyl-L-methionine contacts are provided by residues 198 to 199, S230, 253 to 255, and N329; these read GE and SLH. C372 serves as the catalytic S-methylcysteine intermediate.

Belongs to the radical SAM superfamily. RlmN family. [4Fe-4S] cluster serves as cofactor.

It is found in the cytoplasm. The catalysed reaction is adenosine(2503) in 23S rRNA + 2 reduced [2Fe-2S]-[ferredoxin] + 2 S-adenosyl-L-methionine = 2-methyladenosine(2503) in 23S rRNA + 5'-deoxyadenosine + L-methionine + 2 oxidized [2Fe-2S]-[ferredoxin] + S-adenosyl-L-homocysteine. The enzyme catalyses adenosine(37) in tRNA + 2 reduced [2Fe-2S]-[ferredoxin] + 2 S-adenosyl-L-methionine = 2-methyladenosine(37) in tRNA + 5'-deoxyadenosine + L-methionine + 2 oxidized [2Fe-2S]-[ferredoxin] + S-adenosyl-L-homocysteine. Functionally, specifically methylates position 2 of adenine 2503 in 23S rRNA and position 2 of adenine 37 in tRNAs. In Heliobacterium modesticaldum (strain ATCC 51547 / Ice1), this protein is Probable dual-specificity RNA methyltransferase RlmN.